A 279-amino-acid chain; its full sequence is Lactose operon transcription activator (279 aa).

The region spanning 174–272 is the HTH araC/xylS-type domain; that stretch reads QHAVDFINTN…EISASEYRHH (99 aa). DNA-binding regions (H-T-H motif) lie at residues 191–212 and 239–262; these read EDVAKSVNITRSHLYKLFKKNL and ISDISRQVGYKDPLLFSKNFTKHF.

Transcriptional regulator of the lacPH genes for lactose utilization. The sequence is that of Lactose operon transcription activator (lacR) from Staphylococcus xylosus.